A 322-amino-acid polypeptide reads, in one-letter code: Short-chain dehydrogenase TIC 32, chloroplastic (322 aa).

Residues 36–42 (GASSGIG), 88–89 (DL), Asn115, and Thr136 each bind NADP(+). Substrate is bound at residue Ser170. Catalysis depends on Tyr192, which acts as the Proton acceptor. The interval 298–314 (DTELAKKVWDFSTKLTD) is interaction with calmodulin.

This sequence belongs to the short-chain dehydrogenases/reductases (SDR) family. As to quaternary structure, part of the Tic complex. Interacts with TIC110. As to expression, expressed in leaves and roots.

The protein resides in the plastid. It localises to the chloroplast inner membrane. Its function is as follows. Involved in protein precursor import into chloroplasts. Part of the redox regulon consisting of TIC32, TIC 55 and TIC62. This chain is Short-chain dehydrogenase TIC 32, chloroplastic, found in Arabidopsis thaliana (Mouse-ear cress).